A 146-amino-acid polypeptide reads, in one-letter code: Hemoglobin subunit beta (146 aa).

Residues 2–146 (FLTPEENGHV…VANALAHKYH (145 aa)) form the Globin domain. At Thr-12 the chain carries Phosphothreonine. Ser-44 bears the Phosphoserine mark. At Lys-59 the chain carries N6-acetyllysine. His-63 lines the heme b pocket. Residue Lys-82 is modified to N6-acetyllysine. Residue His-92 coordinates heme b. S-nitrosocysteine is present on Cys-93. Lys-144 carries the post-translational modification N6-acetyllysine.

This sequence belongs to the globin family. Heterotetramer of two alpha chains and two beta chains. As to expression, red blood cells.

Its function is as follows. Involved in oxygen transport from the lung to the various peripheral tissues. This is Hemoglobin subunit beta (HBB) from Hapalemur griseus (Gray gentle lemur).